The following is a 334-amino-acid chain: Phosphate acyltransferase (334 aa).

The protein belongs to the PlsX family. In terms of assembly, homodimer. Probably interacts with PlsY.

The protein resides in the cytoplasm. The enzyme catalyses a fatty acyl-[ACP] + phosphate = an acyl phosphate + holo-[ACP]. It functions in the pathway lipid metabolism; phospholipid metabolism. Catalyzes the reversible formation of acyl-phosphate (acyl-PO(4)) from acyl-[acyl-carrier-protein] (acyl-ACP). This enzyme utilizes acyl-ACP as fatty acyl donor, but not acyl-CoA. This Mycoplasmopsis agalactiae (strain NCTC 10123 / CIP 59.7 / PG2) (Mycoplasma agalactiae) protein is Phosphate acyltransferase.